The chain runs to 2167 residues: SH3 and multiple ankyrin repeat domains protein 1 (2167 aa).

Positions 1-63 (MTHSPATSED…TRGLQGRSMS (63 aa)) are disordered. Over residues 17–32 (SECPEGGSESDSSPDG) the composition is skewed to low complexity. Residues 33–47 (PGRGPQGTRGRGSGA) show a composition bias toward gly residues. An Omega-N-methylarginine modification is found at Arg-43. Tyr-186 is subject to Phosphotyrosine. 7 ANK repeats span residues 195-210 (VARL…YHDS), 212-245 (SGET…FRAR), 246-278 (DGMT…YKDR), 279-312 (RGLT…IADE), 313-345 (NGWQ…AQNA), 346-378 (SGNT…VKNN), and 379-395 (NGQT…NFEL). 2 disordered regions span residues 413–432 (SPKY…TVPP) and 453–546 (APGA…SRGR). Residues 453–479 (APGASSSGTPGPTSGPQGQSQPSAPST) are compositionally biased toward low complexity. Positions 527–542 (PAGGTGGSGGPGGSLG) are enriched in gly residues. Residue Ser-540 is modified to Phosphoserine. Omega-N-methylarginine is present on Arg-544. The 60-residue stretch at 554-613 (VPGRSFMAVKSYQAQGEGEISLSKGEKIKVLSIGEGGFWEGQVKGRVGWFPSDCLEEVAN) folds into the SH3 domain. Residues Ser-638, Ser-641, Ser-671, and Ser-791 each carry the phosphoserine modification. Residues 663-757 (TVLLQKKDSE…TLMVKVVMVT (95 aa)) enclose the PDZ domain. A disordered region spans residues 841–894 (ISASESPGPGGLASLGKHRPKGFFATESSFDPHHRSQPSYDRPSFLPPGPGLML). Position 898 is a phosphoserine (Ser-898). 8 disordered regions span residues 917–1233 (SRSL…LDFT), 1245–1294 (RREG…SIDE), 1308–1417 (GGSS…VLRL), 1429–1725 (RAGL…AGVA), 1740–1787 (GQAF…DPVT), 1842–1866 (KLLP…QPQA), 1898–1988 (PWAR…STRH), and 2002–2029 (RRAP…LPIL). Positions 928–947 (IPPPPTTSPPEPPYSTPPAP) are enriched in pro residues. The residue at position 958 (Arg-958) is an Omega-N-methylarginine. Residues 964–980 (PSSGGPLPASSPSSFDG) show a composition bias toward low complexity. Residues 1004 to 1028 (AHHHPPHHHHHHAPPPQPHHHHAHP) show a composition bias toward basic residues. Omega-N-methylarginine is present on Arg-1059. The span at 1064–1085 (SPTSGAPSPSHHSSSGGSSGPT) shows a compositional bias: low complexity. An omega-N-methylarginine mark is found at Arg-1098 and Arg-1109. 2 stretches are compositionally biased toward low complexity: residues 1132–1146 (SIPS…ALPR) and 1171–1184 (STSS…GSST). Residues 1203-1224 (SPAPATSPVPPSPSPVPTPASP) show a composition bias toward pro residues. Positions 1245-1256 (RREGGWQNEARR) are enriched in basic and acidic residues. Residue Arg-1257 is modified to Asymmetric dimethylarginine. Phosphoserine is present on Ser-1291. Basic and acidic residues predominate over residues 1363 to 1372 (ARERALKESS). Residues 1378–1395 (PQPPPRPPSPRYDAPPPT) show a composition bias toward pro residues. A compositionally biased stretch (basic residues) spans 1396–1408 (LHHHSPHSPHSPH). Omega-N-methylarginine is present on Arg-1429. The residue at position 1442 (Ser-1442) is a Phosphoserine. 2 stretches are compositionally biased toward low complexity: residues 1459–1469 (PGVGPLLLQLG) and 1530–1541 (RRVLPTSPTSPR). Residues 1589 to 1615 (PLTPGPPHPLPDPPSPATPLPAAPPPA) are compositionally biased toward pro residues. Over residues 1624–1641 (DSTASSLTSYDSEVATLT) the composition is skewed to polar residues. Over residues 1648–1676 (PGDPPAPGPPAPAAPAPPAPQPGPDPPPG) the composition is skewed to pro residues. Residues 1684-1694 (VDSRSSSDHPL) are compositionally biased toward basic and acidic residues. The span at 1695 to 1708 (ETISSASTLSSLSA) shows a compositional bias: low complexity. The segment covering 1709–1724 (EGGGNTGGVAGGGAGV) has biased composition (gly residues). Over residues 1850 to 1861 (PGPPPPPLPGPL) the composition is skewed to pro residues. Arg-1901 is modified (omega-N-methylarginine). Low complexity-rich tracts occupy residues 1934–1945 (SQTSLLSKPSSS), 1960–1985 (TGSG…ASAS), and 2002–2012 (RRAPSPSLLPA). Arg-2022, Arg-2042, and Arg-2080 each carry omega-N-methylarginine. Positions 2104-2167 (WTKFDVADWL…DRALKFFLER (64 aa)) constitute an SAM domain.

Belongs to the SHANK family. May homomultimerize via its SAM domain. Interacts with the C-terminus of SSTR2 via the PDZ domain. Interacts with SHARPIN, SPTAN1 and DLGAP1/GKAP. Part of a complex with DLG4/PSD-95 and DLGAP1/GKAP. Interacts with BAIAP2. Interacts with IGSF9. Interacts with HOMER1 and HOMER3. As to expression, expressed only in brain (neuropil of cortex, CA1 region hippocampus and molecular layer of cerebellum).

It is found in the cytoplasm. The protein localises to the synapse. The protein resides in the postsynaptic density. Functionally, seems to be an adapter protein in the postsynaptic density (PSD) of excitatory synapses that interconnects receptors of the postsynaptic membrane including NMDA-type and metabotropic glutamate receptors, and the actin-based cytoskeleton. Plays a role in the structural and functional organization of the dendritic spine and synaptic junction. Overexpression promotes maturation of dendritic spines and the enlargement of spine heads via its ability to recruit Homer to postsynaptic sites, and enhances presynaptic function. The sequence is that of SH3 and multiple ankyrin repeat domains protein 1 (Shank1) from Rattus norvegicus (Rat).